Here is a 486-residue protein sequence, read N- to C-terminus: MATFKDACYHYKRINKLNHTVLKLGVNDTWRSSPPTKYKGWCLDCCQHTDLTYCRGCTMYHVCQWCSQYGRCFLDNEPHLLRMRTFKNEVTKDDLKNLIDMYEILFPMNQKIVCRFINNTRQHKCRNECMTQWYNHLLLPITLQSMSIELDGDVYYVFGYYDNMNSINQTPFSFTNLVDIYDKLLLDDVNFARMSFLPASLQQEYALRYFSKSRFISEQRKCVNDSHFSINVLENLHNPSFKVQITRNCSELSFDWNEACKLVKNVSAYFDMLKTSHIEFYSVSTRCRIFTQCKLKMASKLIKPNYITSNHKTLATEVHNCKWCSVNNSYTVWNDFRIKKIYDNIFNFLRALVKSNVNIGHCSSQEKIYEYVEDVLNVCDDERWKTSIMEIFNCLEPVELDDVKYVLFNHEINWDVINVLVHSIGKVPQILTLENVITIMQSIIYEWFDIRYMRNTPMVTFTIDKLRRLHTGLKTVEYDSGISDIE.

The tract at residues 1–81 is RNA-binding; the sequence is MATFKDACYH…CFLDNEPHLL (81 aa). The tract at residues 42–79 is zinc-binding domain; sequence CLDCCQHTDLTYCRGCTMYHVCQWCSQYGRCFLDNEPH. An important for cytoskeleton localization region spans residues 82-176; the sequence is RMRTFKNEVT…INQTPFSFTN (95 aa). The interval 317-486 is interaction with host IRF3; that stretch reads EVHNCKWCSV…EYDSGISDIE (170 aa). An IKBKB-like degron (ILD) motif motif is present at residues 479 to 483; it reads DSGIS. The short motif at 480-483 is the pLxIS motif element; it reads SGIS.

Belongs to the rotavirus NSP1 family. Interacts (via C-terminus) with host IRF3; this interaction leads to IRF3 degradation. Interacts with host IRF7; this interaction leads to IRF7 degradation. Interacts with host CUL1 and CUL3. Interacts with host BTRC. The C-terminal region is phosphorylated by host CKII/CSNK2A1. Phosphorylation of the DSGXS motif is essential for host NF-kappa-B inhibition.

It localises to the host cytoplasm. The protein localises to the host cytoskeleton. Its function is as follows. Plays a role in the inhibition of host innate immunity by inducing the degradation of key host factors required to activate interferon production such as IRF3, IRF5 or IRF7. Associates with components of cullin RING ligases (CRLs) including CUL1 or CUL3, which are essential multisubunit ubiquitination complexes, to modulate their activities. Recognizes the host NF-kappa-B regulator BTRC through the presence of a DSGXS motif in the C-terminal substrate recognition domain. This chain is Non-structural protein 1, found in Homo sapiens (Human).